Consider the following 331-residue polypeptide: Tryptophan--tRNA ligase (331 aa).

Residues 10–12 (QPS) and 18–19 (GN) each bind ATP. The short motif at 11–19 (PSGQLTLGN) is the 'HIGH' region element. An L-tryptophan-binding site is contributed by aspartate 133. Residues 145 to 147 (GED), valine 184, and 193 to 197 (KMSKS) each bind ATP. A 'KMSKS' region motif is present at residues 193 to 197 (KMSKS).

The protein belongs to the class-I aminoacyl-tRNA synthetase family. Homodimer.

It localises to the cytoplasm. The catalysed reaction is tRNA(Trp) + L-tryptophan + ATP = L-tryptophyl-tRNA(Trp) + AMP + diphosphate + H(+). In terms of biological role, catalyzes the attachment of tryptophan to tRNA(Trp). This Listeria monocytogenes serotype 4b (strain F2365) protein is Tryptophan--tRNA ligase.